The chain runs to 583 residues: Cell division protein FtsZ (583 aa).

GTP-binding positions include 24 to 28, 111 to 113, Glu142, Arg146, and Asp190; these read GGGGN and GTG. 2 disordered regions span residues 391–425 and 510–583; these read HQQP…VQQA and TNSL…RQSN. A compositionally biased stretch (low complexity) spans 412–425; that stretch reads APAALRPAQPVQQA.

Belongs to the FtsZ family. Homodimer. Polymerizes to form a dynamic ring structure in a strictly GTP-dependent manner. Interacts directly with several other division proteins.

The protein resides in the cytoplasm. Functionally, essential cell division protein that forms a contractile ring structure (Z ring) at the future cell division site. The regulation of the ring assembly controls the timing and the location of cell division. One of the functions of the FtsZ ring is to recruit other cell division proteins to the septum to produce a new cell wall between the dividing cells. Binds GTP and shows GTPase activity. This is Cell division protein FtsZ from Rhizobium radiobacter (Agrobacterium tumefaciens).